The primary structure comprises 46 residues: Defensin Tk-AMP-D5 (46 aa).

4 disulfides stabilise this stretch: C3/C46, C14/C34, C20/C40, and C24/C42.

Its function is as follows. Plant defense peptide. This Triticum kiharae (Wheat) protein is Defensin Tk-AMP-D5.